The chain runs to 594 residues: DELLA protein 1 (594 aa).

The interval 1–36 is disordered; the sequence is MKREHQESFGGGVISNNNKTNTNHLNSSKNINFGEC. Residues 15-30 are compositionally biased toward low complexity; it reads SNNNKTNTNHLNSSKN. The DELLA motif signature appears at 61–65; the sequence is DELLA. Residues 207–587 form the GRAS domain; it reads VDTQETGVRL…RSLIATSAWK (381 aa). The leucine repeat I (LRI) stretch occupies residues 214–268; that stretch reads VRLVHTLMACAEAIQQKNLKLAEALVKHISLLASLQTGAMRKVASYFAQALARRI. Residues 216–253 are required for possible homodimerization; that stretch reads LVHTLMACAEAIQQKNLKLAEALVKHISLLASLQTGAM. Residues 221–225 carry the LxCxE motif; degenerate motif; that stretch reads MACAE. A VHIID region spans residues 285–350; it reads HMHFYESSPY…GGPPTFRLTG (66 aa). The VHIID motif lies at 316 to 320; it reads VHVID. Positions 364–396 are leucine repeat II (LRII); the sequence is QVGWKLAQLAQTIGVQFEFRGFVCNSIADLDPN. The segment at 406-508 is PFYRE; the sequence is VAVNSVFELH…EIYLGKQICN (103 aa). Residues 414-418 carry the LXXLL motif; degenerate motif; it reads LHTML. Residues 511–587 are SAW; it reads AYEGVDRVER…RSLIATSAWK (77 aa).

This sequence belongs to the GRAS family. DELLA subfamily. In terms of assembly, may be a homodimer. Post-translationally, ubiquitinated. Upon GA application it is ubiquitinated, leading to its subsequent degradation. In terms of tissue distribution, strongly expressed in the vascular tissue and endodermis but barely in the inner cortical cells where arbuscule are formed during arbuscular mycorrhizal (AM) symbiosis.

It localises to the nucleus. Functionally, probable transcriptional regulator that acts as a repressor of the gibberellin (GA) signaling pathway. Probably acts by participating in large multiprotein complexes that repress transcription of GA-inducible genes. Upon GA application, it is degraded by the proteasome, allowing the GA signaling pathway. Together with DELLA2, required to enable arbuscule development during arbuscular mycorrhizal (AM) symbiosis with AM fungi (e.g. Glomus versiforme) via the regulation of RAM1 which, in turn, regulates various AM genes (e.g. NSP1, NSP2, PT4, LEC5, RAM2, EXO70I, STR and RAD1). The chain is DELLA protein 1 from Medicago truncatula (Barrel medic).